Reading from the N-terminus, the 321-residue chain is Probable arabinan endo-1,5-alpha-L-arabinosidase C (321 aa).

An N-terminal signal peptide occupies residues 1–20; sequence MYLYTLILLFLASVNVNAYA. The active-site Proton acceptor is D33. 2 N-linked (GlcNAc...) asparagine glycosylation sites follow: N75 and N192. E200 functions as the Proton donor in the catalytic mechanism. A glycan (N-linked (GlcNAc...) asparagine) is linked at N224.

The protein belongs to the glycosyl hydrolase 43 family.

The protein localises to the secreted. It catalyses the reaction Endohydrolysis of (1-&gt;5)-alpha-arabinofuranosidic linkages in (1-&gt;5)-arabinans.. The protein operates within glycan metabolism; L-arabinan degradation. Its function is as follows. Endo-1,5-alpha-L-arabinanase involved in degradation of pectin. Its preferred substrate is linear 1,5-alpha-L-arabinan. The sequence is that of Probable arabinan endo-1,5-alpha-L-arabinosidase C (abnC) from Neosartorya fischeri (strain ATCC 1020 / DSM 3700 / CBS 544.65 / FGSC A1164 / JCM 1740 / NRRL 181 / WB 181) (Aspergillus fischerianus).